The following is a 1010-amino-acid chain: MSDLEKIRLKRLAKLQQTNSEANSSKEPKESNIAPEPKKPDLKKRFIGSKATTSNSEQKEISPPVTSGAPKHRLFSKDEWMHFITCQALNITLSETDSSKYYLEGFKKDLEEEGSPLLFNENNVDSALLSRLSTTGNNTFSYLLQSWSFLYQYKKRLPKDENQDFKIHYLSLLKSLLVSYAGIVVMLPDTFNSETIDLAEVLIGAEGIPLEFLSEFVQRFEHENLDELFIPVLESLSLKIGLMNVDTVQMNVMQIILQLVSLKPIALLLPKLPSWNPTNNAGEIEYKTFLGRISSLSVFTQDVASRYFSNSTERSAQNISSSISSLKLTMSTYQDVLFQIFNTLIRTSTSLRESVLDFFAMVVNANHKRQSIQVNHFDITSDACMLNFSHVLSRLSEPFLDIGCSKIDRVQVEYFRRNPRVDIKEETKLNADQKASESFYSKPAEGSNNFISDIFFLNLAFHHYGVNATFKALEQLVQSIRDSEKLKERLETEQQNMSGSFQATRLTAQLSRLDQRLDLDRSFVHCYEIMLTQTSDTSRSFSFLNFVAIWLSRLADGQSSTYPKMPLSLPFNENAPEAFKCLPEYFIETITDYMLSLFKTSSSTLTLHSLEPLCEFCVSFLTQANYIKNPYLRAKLAEILYFGVQTHVGRSELLLDVVRTSKVATRWLLPALMAFYIEIESTGQSTQFYDKFNIRFYICEVFRTIWKQPAYFGKLEQEQKTNLPFFVKFVALMLNDATYLLDEALLKLTEIHNLQSLLADAISNSNSNQNVQESQSNLAAAERQASTYCQLGNETIFMLKLFTSSIPKAFCAVEIVDRLAAMLNYNLQALCGPKCSNLKVEDPTKYHFNAKTLLSIIFDVYLNLCNEPAFVEAVAHDGRSYSKEIFERATSIMTKHNLKSSFDIEAIKEFVNRVEAFRLQEATEEEDMGDIPDYFLDPLMFTIMKDPVVLPRSGISIDRSTIKAHLLSDATDPFNRTPLTLDDVTPNDTLREEINTFLKSKRNKHSRNSE.

Residues 13–70 are disordered; that stretch reads AKLQQTNSEANSSKEPKESNIAPEPKKPDLKKRFIGSKATTSNSEQKEISPPVTSGAP. The segment covering 24 to 44 has biased composition (basic and acidic residues); that stretch reads SSKEPKESNIAPEPKKPDLKK. Residues 930-1004 enclose the U-box domain; it reads DIPDYFLDPL…NTFLKSKRNK (75 aa).

Belongs to the ubiquitin conjugation factor E4 family.

It localises to the cytoplasm. The protein resides in the nucleus. It participates in protein modification; protein ubiquitination. E4 ubiquitin chain-elongation enzyme specifically involved in polyubiquitin chain assembly. Binds to cdc48 and elongates mono- and diubiquitinated ERAD substrates presented by the ufd1-npl4-cdc48 (UNC) AAA ATPase complex to a chain length of 4 to 6 ubiquitin moieties. Delivers these polyubiquitinated substrates to downstream ERAD components, which target them to the proteasome. Enhances ubiquitination at 'Lys-48', but not at 'Lys-29' of the Ub moiety. In Schizosaccharomyces pombe (strain 972 / ATCC 24843) (Fission yeast), this protein is Ubiquitin conjugation factor E4 (ufd2).